A 196-amino-acid polypeptide reads, in one-letter code: MNEAVSPGALSTLFTDARTHNGWRETPVSDETLRELYALMKWGPTSANCSPARIVFIRTAEGKERLRPALSSGNLQKTLTAPVTAIVAWDSEFYERLPQLFPHGDARSWFTSSPQLAEETAFRNSSMQAAYLIIACRALGLDTGPMSGFDRQHVDDAFFAGSTLKSNLLINIGYGDSSKLFARLPRLSFEEACGLL.

The protein belongs to the nitroreductase family. HadB/RutE subfamily. It depends on FMN as a cofactor.

It catalyses the reaction 3-hydroxypropanoate + NADP(+) = 3-oxopropanoate + NADPH + H(+). Its function is as follows. May reduce toxic product malonic semialdehyde to 3-hydroxypropionic acid, which is excreted. The polypeptide is Probable malonic semialdehyde reductase RutE (Escherichia coli O157:H7).